The following is a 272-amino-acid chain: Shikimate dehydrogenase (NADP(+)) (272 aa).

Shikimate-binding positions include 14–16 (SKS) and T61. Catalysis depends on K65, which acts as the Proton acceptor. Position 77 (E77) interacts with NADP(+). Shikimate is bound by residues N86 and D102. NADP(+) contacts are provided by residues 126–130 (GAGGA), 149–154 (NRTYSR), and M213. Position 215 (Y215) interacts with shikimate. G237 contributes to the NADP(+) binding site.

The protein belongs to the shikimate dehydrogenase family. In terms of assembly, homodimer.

The enzyme catalyses shikimate + NADP(+) = 3-dehydroshikimate + NADPH + H(+). It functions in the pathway metabolic intermediate biosynthesis; chorismate biosynthesis; chorismate from D-erythrose 4-phosphate and phosphoenolpyruvate: step 4/7. Its function is as follows. Involved in the biosynthesis of the chorismate, which leads to the biosynthesis of aromatic amino acids. Catalyzes the reversible NADPH linked reduction of 3-dehydroshikimate (DHSA) to yield shikimate (SA). The polypeptide is Shikimate dehydrogenase (NADP(+)) (Enterobacter sp. (strain 638)).